We begin with the raw amino-acid sequence, 299 residues long: NAD kinase 1 (299 aa).

Residue aspartate 62 is the Proton acceptor of the active site. NAD(+)-binding positions include 62–63, lysine 67, 143–144, lysine 173, and aspartate 175; these read DG and ND.

It belongs to the NAD kinase family. It depends on a divalent metal cation as a cofactor.

The protein localises to the cytoplasm. It carries out the reaction NAD(+) + ATP = ADP + NADP(+) + H(+). Involved in the regulation of the intracellular balance of NAD and NADP, and is a key enzyme in the biosynthesis of NADP. Catalyzes specifically the phosphorylation on 2'-hydroxyl of the adenosine moiety of NAD to yield NADP. This chain is NAD kinase 1, found in Prochlorococcus marinus subsp. pastoris (strain CCMP1986 / NIES-2087 / MED4).